The chain runs to 93 residues: Large ribosomal subunit protein uL23cz/uL23cy (93 aa).

The protein belongs to the universal ribosomal protein uL23 family. As to quaternary structure, part of the 50S ribosomal subunit.

Its subcellular location is the plastid. The protein localises to the chloroplast. Binds to 23S rRNA. In Drimys granadensis, this protein is Large ribosomal subunit protein uL23cz/uL23cy (rpl23-A).